The primary structure comprises 382 residues: 8-amino-7-oxononanoate synthase (382 aa).

Arg26 is a substrate binding site. 104 to 105 is a pyridoxal 5'-phosphate binding site; the sequence is GY. Residue His129 participates in substrate binding. Pyridoxal 5'-phosphate contacts are provided by residues Ser175, 200-203, and 232-235; these read DEAH and TLSK. An N6-(pyridoxal phosphate)lysine modification is found at Lys235. Thr345 provides a ligand contact to substrate.

This sequence belongs to the class-II pyridoxal-phosphate-dependent aminotransferase family. BioF subfamily. As to quaternary structure, homodimer. It depends on pyridoxal 5'-phosphate as a cofactor.

It catalyses the reaction 6-carboxyhexanoyl-[ACP] + L-alanine + H(+) = (8S)-8-amino-7-oxononanoate + holo-[ACP] + CO2. Its pathway is cofactor biosynthesis; biotin biosynthesis. Its function is as follows. Catalyzes the decarboxylative condensation of pimeloyl-[acyl-carrier protein] and L-alanine to produce 8-amino-7-oxononanoate (AON), [acyl-carrier protein], and carbon dioxide. This is 8-amino-7-oxononanoate synthase from Mycobacterium sp. (strain KMS).